We begin with the raw amino-acid sequence, 278 residues long: Large ribosomal subunit protein uL2 (278 aa).

Positions 212–278 (NRHRGIRPQT…IISRKKHKKG (67 aa)) are disordered. The span at 257 to 278 (YKTRKKKASDKLIISRKKHKKG) shows a compositional bias: basic residues.

The protein belongs to the universal ribosomal protein uL2 family. Part of the 50S ribosomal subunit. Forms a bridge to the 30S subunit in the 70S ribosome.

Its function is as follows. One of the primary rRNA binding proteins. Required for association of the 30S and 50S subunits to form the 70S ribosome, for tRNA binding and peptide bond formation. It has been suggested to have peptidyltransferase activity; this is somewhat controversial. Makes several contacts with the 16S rRNA in the 70S ribosome. This chain is Large ribosomal subunit protein uL2, found in Helicobacter pylori (strain Shi470).